We begin with the raw amino-acid sequence, 74 residues long: Putative antitoxin VapB48 (74 aa).

Functionally, possibly the antitoxin component of a type II toxin-antitoxin (TA) system. Its cognate toxin is VapC48 (Potential). In Mycobacterium tuberculosis (strain CDC 1551 / Oshkosh), this protein is Putative antitoxin VapB48 (vapB48).